A 270-amino-acid chain; its full sequence is tRNA (guanine-N(1)-)-methyltransferase (270 aa).

Residues G117 and 137–142 contribute to the S-adenosyl-L-methionine site; that span reads IGDYVL.

It belongs to the RNA methyltransferase TrmD family. Homodimer.

It is found in the cytoplasm. The enzyme catalyses guanosine(37) in tRNA + S-adenosyl-L-methionine = N(1)-methylguanosine(37) in tRNA + S-adenosyl-L-homocysteine + H(+). Its function is as follows. Specifically methylates guanosine-37 in various tRNAs. In Heliobacterium modesticaldum (strain ATCC 51547 / Ice1), this protein is tRNA (guanine-N(1)-)-methyltransferase.